A 32-amino-acid polypeptide reads, in one-letter code: Cytochrome b6-f complex subunit 6 (32 aa).

The chain crosses the membrane as a helical span at residues 4-26; it reads ITSYVGLLFTALGFTLGLYFGLT.

It belongs to the PetL family. As to quaternary structure, the 4 large subunits of the cytochrome b6-f complex are cytochrome b6, subunit IV (17 kDa polypeptide, PetD), cytochrome f and the Rieske protein, while the 4 small subunits are PetG, PetL, PetM and PetN. The complex functions as a dimer.

It localises to the plastid. Its subcellular location is the chloroplast thylakoid membrane. In terms of biological role, component of the cytochrome b6-f complex, which mediates electron transfer between photosystem II (PSII) and photosystem I (PSI), cyclic electron flow around PSI, and state transitions. PetL is important for photoautotrophic growth as well as for electron transfer efficiency and stability of the cytochrome b6-f complex. The polypeptide is Cytochrome b6-f complex subunit 6 (Tetradesmus obliquus (Green alga)).